The primary structure comprises 393 residues: Acetyl-CoA acetyltransferase (393 aa).

Residue cysteine 90 is the Acyl-thioester intermediate of the active site. Active-site proton acceptor residues include histidine 349 and cysteine 379.

The protein belongs to the thiolase-like superfamily. Thiolase family. In terms of assembly, homotetramer.

The protein localises to the cytoplasm. The catalysed reaction is 2 acetyl-CoA = acetoacetyl-CoA + CoA. The protein operates within biopolymer metabolism; poly-(R)-3-hydroxybutanoate biosynthesis. It functions in the pathway metabolic intermediate biosynthesis; (R)-mevalonate biosynthesis; (R)-mevalonate from acetyl-CoA: step 1/3. The protein is Acetyl-CoA acetyltransferase of Rhizobium meliloti (strain 1021) (Ensifer meliloti).